We begin with the raw amino-acid sequence, 98 residues long: NADH-ubiquinone oxidoreductase chain 4L (98 aa).

Helical transmembrane passes span 29–49 and 61–81; these read SLLCLEGMMLSMFILSTLLIL and ILLLVFAACEAAIGLALLVTV.

It belongs to the complex I subunit 4L family. Core subunit of respiratory chain NADH dehydrogenase (Complex I) which is composed of 45 different subunits.

The protein localises to the mitochondrion inner membrane. It catalyses the reaction a ubiquinone + NADH + 5 H(+)(in) = a ubiquinol + NAD(+) + 4 H(+)(out). Functionally, core subunit of the mitochondrial membrane respiratory chain NADH dehydrogenase (Complex I) which catalyzes electron transfer from NADH through the respiratory chain, using ubiquinone as an electron acceptor. Part of the enzyme membrane arm which is embedded in the lipid bilayer and involved in proton translocation. This chain is NADH-ubiquinone oxidoreductase chain 4L (MT-ND4L), found in Cheirogaleus medius (Fat-tailed dwarf lemur).